The sequence spans 178 residues: ATP synthase subunit delta (178 aa).

The protein belongs to the ATPase delta chain family. As to quaternary structure, F-type ATPases have 2 components, F(1) - the catalytic core - and F(0) - the membrane proton channel. F(1) has five subunits: alpha(3), beta(3), gamma(1), delta(1), epsilon(1). F(0) has three main subunits: a(1), b(2) and c(10-14). The alpha and beta chains form an alternating ring which encloses part of the gamma chain. F(1) is attached to F(0) by a central stalk formed by the gamma and epsilon chains, while a peripheral stalk is formed by the delta and b chains.

The protein localises to the cell inner membrane. Functionally, f(1)F(0) ATP synthase produces ATP from ADP in the presence of a proton or sodium gradient. F-type ATPases consist of two structural domains, F(1) containing the extramembraneous catalytic core and F(0) containing the membrane proton channel, linked together by a central stalk and a peripheral stalk. During catalysis, ATP synthesis in the catalytic domain of F(1) is coupled via a rotary mechanism of the central stalk subunits to proton translocation. This protein is part of the stalk that links CF(0) to CF(1). It either transmits conformational changes from CF(0) to CF(1) or is implicated in proton conduction. In Ectopseudomonas mendocina (strain ymp) (Pseudomonas mendocina), this protein is ATP synthase subunit delta.